Reading from the N-terminus, the 364-residue chain is MLMPRQNCEVFRQLFVNDTPLMDMRAPIEFAQGAFPTSINHPLMEDEERKAVGTCYKAHGQDAAIALGHQLVNGDIKAARLAQWKAFAEENPNGYLYCFRGGLRSRITQQWLKEAGIDYPMVVGGYKALRRFLIETIDTVAQQPMTIVGGNTGSGKTIMVNELANGIDLEGAANHRGSSFGRYVTAQRTQIDFENVLAVEMLKKQAQGCTHFVFEDEGRAIGSASVPLSINAAMGNADVAIVDDPLDVRIDRLIDDYVVRMQRDYIAQNGEQQGWELFTEYLERGMFGIRKRLGMKRYEELLAAQKQAIATQKSNGTLAEHDNWLRPLLIEYYDPMYTYQLSKKADRIVFRGNYQEVKSWLADK.

Positions 15–138 constitute a Rhodanese domain; it reads FVNDTPLMDM…LRRFLIETID (124 aa). Cysteine 98 acts as the S-selanylcysteine intermediate in catalysis.

This sequence belongs to the SelU family. In terms of assembly, monomer.

It carries out the reaction 5-methylaminomethyl-2-thiouridine(34) in tRNA + selenophosphate + (2E)-geranyl diphosphate + H2O + H(+) = 5-methylaminomethyl-2-selenouridine(34) in tRNA + (2E)-thiogeraniol + phosphate + diphosphate. It catalyses the reaction 5-methylaminomethyl-2-thiouridine(34) in tRNA + (2E)-geranyl diphosphate = 5-methylaminomethyl-S-(2E)-geranyl-thiouridine(34) in tRNA + diphosphate. The enzyme catalyses 5-methylaminomethyl-S-(2E)-geranyl-thiouridine(34) in tRNA + selenophosphate + H(+) = 5-methylaminomethyl-2-(Se-phospho)selenouridine(34) in tRNA + (2E)-thiogeraniol. The catalysed reaction is 5-methylaminomethyl-2-(Se-phospho)selenouridine(34) in tRNA + H2O = 5-methylaminomethyl-2-selenouridine(34) in tRNA + phosphate. In terms of biological role, involved in the post-transcriptional modification of the uridine at the wobble position (U34) of tRNA(Lys), tRNA(Glu) and tRNA(Gln). Catalyzes the conversion of 2-thiouridine (S2U-RNA) to 2-selenouridine (Se2U-RNA). Acts in a two-step process involving geranylation of 2-thiouridine (S2U) to S-geranyl-2-thiouridine (geS2U) and subsequent selenation of the latter derivative to 2-selenouridine (Se2U) in the tRNA chain. This Photobacterium profundum (strain SS9) protein is tRNA 2-selenouridine synthase.